We begin with the raw amino-acid sequence, 85 residues long: Large ribosomal subunit protein bL31B (85 aa).

Belongs to the bacterial ribosomal protein bL31 family. Type B subfamily. As to quaternary structure, part of the 50S ribosomal subunit.

The sequence is that of Large ribosomal subunit protein bL31B from Macrococcus caseolyticus (strain JCSC5402) (Macrococcoides caseolyticum).